Consider the following 378-residue polypeptide: Calponin homolog OV9M (378 aa).

Residues 1 to 20 (MPAQPAQENAQDADDAQANA) are compositionally biased toward low complexity. The interval 1–35 (MPAQPAQENAQDADDAQANATMETRVAGQGQPKRV) is disordered. Calponin-like repeat units lie at residues 50-75 (IPSQ…RNTQ), 98-123 (VRLQ…RDVC), 151-176 (VRLQ…RRET), 197-222 (IPLQ…RRET), 244-269 (IPSQ…RWEV), 285-310 (VRLQ…RNTT), and 330-355 (IPSQ…RDVK). A disordered region spans residues 175-194 (ETTKMTDSKHPDYDHERPDQ). The interval 230-256 (HPEYDPESSIDSSTIPSQMGSNKYASQ) is disordered. Residues 238–256 (SIDSSTIPSQMGSNKYASQ) show a composition bias toward polar residues. The interval 331–352 (PSQAGWNRGDSQKGMTGFGAPR) is disordered.

Belongs to the calponin family. As to expression, found in the longitudinal muscles below the hypodermis.

In terms of biological role, could be involved in muscle contraction. This Onchocerca volvulus protein is Calponin homolog OV9M.